The sequence spans 336 residues: Holliday junction branch migration complex subunit RuvB (336 aa).

The segment at 4–184 is large ATPase domain (RuvB-L); that stretch reads ADRLISAGAT…FGIVQRLEFY (181 aa). ATP contacts are provided by residues Ile23, Arg24, Gly65, Lys68, Thr69, Thr70, 131–133, Arg174, Tyr184, and Arg221; that span reads EDY. Thr69 is a binding site for Mg(2+). The interval 185–255 is small ATPAse domain (RuvB-S); that stretch reads QVPDLQHIVG…IAAQALDMLN (71 aa). The head domain (RuvB-H) stretch occupies residues 258 to 336; that stretch reads AEGFDYMDRK…HFGITPPEMP (79 aa). DNA contacts are provided by Arg294, Arg313, and Arg318.

Belongs to the RuvB family. Homohexamer. Forms an RuvA(8)-RuvB(12)-Holliday junction (HJ) complex. HJ DNA is sandwiched between 2 RuvA tetramers; dsDNA enters through RuvA and exits via RuvB. An RuvB hexamer assembles on each DNA strand where it exits the tetramer. Each RuvB hexamer is contacted by two RuvA subunits (via domain III) on 2 adjacent RuvB subunits; this complex drives branch migration. In the full resolvosome a probable DNA-RuvA(4)-RuvB(12)-RuvC(2) complex forms which resolves the HJ.

It is found in the cytoplasm. The enzyme catalyses ATP + H2O = ADP + phosphate + H(+). The RuvA-RuvB-RuvC complex processes Holliday junction (HJ) DNA during genetic recombination and DNA repair, while the RuvA-RuvB complex plays an important role in the rescue of blocked DNA replication forks via replication fork reversal (RFR). RuvA specifically binds to HJ cruciform DNA, conferring on it an open structure. The RuvB hexamer acts as an ATP-dependent pump, pulling dsDNA into and through the RuvAB complex. RuvB forms 2 homohexamers on either side of HJ DNA bound by 1 or 2 RuvA tetramers; 4 subunits per hexamer contact DNA at a time. Coordinated motions by a converter formed by DNA-disengaged RuvB subunits stimulates ATP hydrolysis and nucleotide exchange. Immobilization of the converter enables RuvB to convert the ATP-contained energy into a lever motion, pulling 2 nucleotides of DNA out of the RuvA tetramer per ATP hydrolyzed, thus driving DNA branch migration. The RuvB motors rotate together with the DNA substrate, which together with the progressing nucleotide cycle form the mechanistic basis for DNA recombination by continuous HJ branch migration. Branch migration allows RuvC to scan DNA until it finds its consensus sequence, where it cleaves and resolves cruciform DNA. The protein is Holliday junction branch migration complex subunit RuvB of Salmonella agona (strain SL483).